The following is a 186-amino-acid chain: Calcium-binding protein NCSA (186 aa).

EF-hand domains follow at residues S40–G58, L66–G93, T94–L129, and D142–I177. 10 residues coordinate Ca(2+): D107, D109, N111, Y113, E118, D155, D157, D159, Y161, and E166.

Belongs to the recoverin family.

Its function is as follows. May prevent cells from entering development prematurely in the presence of environmental nutrients. This chain is Calcium-binding protein NCSA (ncsA), found in Dictyostelium discoideum (Social amoeba).